A 96-amino-acid chain; its full sequence is Large ribosomal subunit protein uL23 (96 aa).

It belongs to the universal ribosomal protein uL23 family. Part of the 50S ribosomal subunit. Contacts protein L29, and trigger factor when it is bound to the ribosome.

Functionally, one of the early assembly proteins it binds 23S rRNA. One of the proteins that surrounds the polypeptide exit tunnel on the outside of the ribosome. Forms the main docking site for trigger factor binding to the ribosome. The polypeptide is Large ribosomal subunit protein uL23 (Endomicrobium trichonymphae).